A 214-amino-acid polypeptide reads, in one-letter code: ATP phosphoribosyltransferase (214 aa).

The protein belongs to the ATP phosphoribosyltransferase family. Short subfamily. In terms of assembly, heteromultimer composed of HisG and HisZ subunits.

Its subcellular location is the cytoplasm. The catalysed reaction is 1-(5-phospho-beta-D-ribosyl)-ATP + diphosphate = 5-phospho-alpha-D-ribose 1-diphosphate + ATP. Its pathway is amino-acid biosynthesis; L-histidine biosynthesis; L-histidine from 5-phospho-alpha-D-ribose 1-diphosphate: step 1/9. In terms of biological role, catalyzes the condensation of ATP and 5-phosphoribose 1-diphosphate to form N'-(5'-phosphoribosyl)-ATP (PR-ATP). Has a crucial role in the pathway because the rate of histidine biosynthesis seems to be controlled primarily by regulation of HisG enzymatic activity. The polypeptide is ATP phosphoribosyltransferase (Deinococcus deserti (strain DSM 17065 / CIP 109153 / LMG 22923 / VCD115)).